Consider the following 297-residue polypeptide: Thiosulfate sulfurtransferase (297 aa).

Lysine 14 is modified (N6-acetyllysine; alternate). At lysine 14 the chain carries N6-succinyllysine; alternate. Residues 25 to 143 form the Rhodanese 1 domain; sequence LGPGLRVLDA…WLKEGHPVTS (119 aa). The O-linked (GlcNAc) serine glycan is linked to serine 35. Serine 38 carries the post-translational modification Phosphoserine. Lysine 136 carries the N6-acetyllysine; alternate modification. The residue at position 136 (lysine 136) is an N6-succinyllysine; alternate. The segment at 144-159 is hinge; sequence EPSRPEPAVFKATLDR. At lysine 163 the chain carries N6-acetyllysine. The 116-residue stretch at 173–288 folds into the Rhodanese 2 domain; the sequence is QSKRFQLVDS…WFHQAPPETR (116 aa). Lysine 175 carries the post-translational modification N6-acetyllysine; alternate. Residue lysine 175 is modified to N6-succinyllysine; alternate. Position 187 (arginine 187) interacts with substrate. An N6-acetyllysine; alternate modification is found at lysine 224. Lysine 224 bears the N6-succinyllysine; alternate mark. Lysine 236 is subject to N6-acetyllysine. N6-acetyllysine; alternate is present on lysine 237. Position 237 is an N6-succinyllysine; alternate (lysine 237). Cysteine 248 (cysteine persulfide intermediate) is an active-site residue. Residue lysine 250 coordinates substrate.

As to quaternary structure, monomer.

It localises to the mitochondrion matrix. The catalysed reaction is thiosulfate + hydrogen cyanide = thiocyanate + sulfite + 2 H(+). Functionally, together with MRPL18, acts as a mitochondrial import factor for the cytosolic 5S rRNA. Only the nascent unfolded cytoplasmic form is able to bind to the 5S rRNA. Formation of iron-sulfur complexes and cyanide detoxification. Binds molecular oxygen and sulfur. The chain is Thiosulfate sulfurtransferase (TST) from Cricetulus griseus (Chinese hamster).